The following is a 576-amino-acid chain: Glutamine-dependent NAD(+) synthetase (576 aa).

In terms of domain architecture, CN hydrolase spans 4–246; sequence LRVTLAQLNP…EEIITVDLDL (243 aa). The active-site Proton acceptor; for glutaminase activity is the glutamate 44. The active-site For glutaminase activity is lysine 112. An L-glutamine-binding site is contributed by tyrosine 118. Residue cysteine 148 is the Nucleophile; for glutaminase activity of the active site. L-glutamine contacts are provided by serine 176 and lysine 182. The segment at 292-576 is ligase; sequence PVREEEMFRA…PITNRFKEPL (285 aa). 321–328 serves as a coordination point for ATP; sequence GLSGGMDS. Residue asparagine 404 coordinates deamido-NAD(+). Residue threonine 428 coordinates ATP. Deamido-NAD(+) contacts are provided by glutamate 433 and lysine 545.

It in the C-terminal section; belongs to the NAD synthetase family.

The enzyme catalyses deamido-NAD(+) + L-glutamine + ATP + H2O = L-glutamate + AMP + diphosphate + NAD(+) + H(+). It functions in the pathway cofactor biosynthesis; NAD(+) biosynthesis; NAD(+) from deamido-NAD(+) (L-Gln route): step 1/1. Functionally, catalyzes the ATP-dependent amidation of deamido-NAD to form NAD. Uses L-glutamine as a nitrogen source. The polypeptide is Glutamine-dependent NAD(+) synthetase (nadE2) (Thermotoga maritima (strain ATCC 43589 / DSM 3109 / JCM 10099 / NBRC 100826 / MSB8)).